Consider the following 276-residue polypeptide: NH(3)-dependent NAD(+) synthetase (276 aa).

43–50 (GISGGVDS) contacts ATP. Aspartate 49 is a Mg(2+) binding site. A deamido-NAD(+)-binding site is contributed by arginine 146. Threonine 166 lines the ATP pocket. Glutamate 171 lines the Mg(2+) pocket. Lysine 179 and aspartate 186 together coordinate deamido-NAD(+). Residues lysine 195 and threonine 217 each coordinate ATP. 266 to 267 (HK) lines the deamido-NAD(+) pocket.

This sequence belongs to the NAD synthetase family. Homodimer.

It carries out the reaction deamido-NAD(+) + NH4(+) + ATP = AMP + diphosphate + NAD(+) + H(+). It functions in the pathway cofactor biosynthesis; NAD(+) biosynthesis; NAD(+) from deamido-NAD(+) (ammonia route): step 1/1. Its function is as follows. Catalyzes the ATP-dependent amidation of deamido-NAD to form NAD. Uses ammonia as a nitrogen source. The chain is NH(3)-dependent NAD(+) synthetase from Shewanella amazonensis (strain ATCC BAA-1098 / SB2B).